The sequence spans 459 residues: 11S globulin seed storage protein 2 (459 aa).

The first 21 residues, 1-21, serve as a signal peptide directing secretion; the sequence is MVAFKFLLALSLSLLVSAAIA. Intrachain disulfides connect cysteine 34–cysteine 67 and cysteine 110–cysteine 284. Cupin type-1 domains follow at residues 37–237 and 290–439; these read QRIS…ETIR and TNVE…NQAQ. Residues 118-139 form a disordered region; sequence RSQRTMERTEASEQQDRGSVRD. Residues 121–139 are compositionally biased toward basic and acidic residues; it reads RTMERTEASEQQDRGSVRD.

It belongs to the 11S seed storage protein (globulins) family. Homohexamer. Each subunit is composed of an acidic and a basic chain derived from a single precursor and linked by a disulfide bond. As to expression, expressed in seeds (at protein level). Expressed in seeds.

In terms of biological role, seed storage protein. This chain is 11S globulin seed storage protein 2, found in Sesamum indicum (Oriental sesame).